Consider the following 543-residue polypeptide: ABC transport system permease protein p69 (543 aa).

12 helical membrane passes run 18-38 (IWYW…YSWI), 78-98 (AFFV…FSYW), 115-135 (ITIV…SNLF), 141-161 (ATLT…TTFF), 211-231 (TLLS…PLSI), 237-257 (LVLI…VVVF), 288-308 (IIFI…LVTI), 354-374 (ISLI…SCNL), 379-399 (FSIS…ILLF), 413-433 (IILV…SINF), 482-502 (LILF…NFFE), and 510-530 (GSVT…FLSV). An ABC transmembrane type-1 domain is found at 74–256 (LAQTAFFVTG…TFLIFIEVVV (183 aa)).

Belongs to the binding-protein-dependent transport system permease family.

It localises to the cell membrane. Functionally, probably part of a high-affinity transport system. This Mycoplasma genitalium (strain ATCC 33530 / DSM 19775 / NCTC 10195 / G37) (Mycoplasmoides genitalium) protein is ABC transport system permease protein p69 (p69).